We begin with the raw amino-acid sequence, 206 residues long: Large ribosomal subunit protein uL4 (206 aa).

The segment at Thr-47 to Ala-77 is disordered.

The protein belongs to the universal ribosomal protein uL4 family. As to quaternary structure, part of the 50S ribosomal subunit.

In terms of biological role, one of the primary rRNA binding proteins, this protein initially binds near the 5'-end of the 23S rRNA. It is important during the early stages of 50S assembly. It makes multiple contacts with different domains of the 23S rRNA in the assembled 50S subunit and ribosome. Forms part of the polypeptide exit tunnel. In Nitrosomonas europaea (strain ATCC 19718 / CIP 103999 / KCTC 2705 / NBRC 14298), this protein is Large ribosomal subunit protein uL4.